The sequence spans 114 residues: Hydrogenase maturation factor HypA (114 aa).

His2 contacts Ni(2+). Positions 73, 76, 90, and 93 each coordinate Zn(2+).

Belongs to the HypA/HybF family.

Involved in the maturation of [NiFe] hydrogenases. Required for nickel insertion into the metal center of the hydrogenase. The sequence is that of Hydrogenase maturation factor HypA from Klebsiella pneumoniae subsp. pneumoniae (strain ATCC 700721 / MGH 78578).